A 462-amino-acid chain; its full sequence is Argininosuccinate lyase 2 (462 aa).

This sequence belongs to the lyase 1 family. Argininosuccinate lyase subfamily.

Its subcellular location is the cytoplasm. It catalyses the reaction 2-(N(omega)-L-arginino)succinate = fumarate + L-arginine. The protein operates within amino-acid biosynthesis; L-arginine biosynthesis; L-arginine from L-ornithine and carbamoyl phosphate: step 3/3. The chain is Argininosuccinate lyase 2 from Shouchella clausii (strain KSM-K16) (Alkalihalobacillus clausii).